Consider the following 316-residue polypeptide: Ribose-phosphate pyrophosphokinase (316 aa).

ATP is bound by residues 37-39 (DGE) and 96-97 (RQ). Mg(2+)-binding residues include His131 and Asp171. Residue Lys195 is part of the active site. Residues Arg197, Asp221, and 225–229 (DTGGT) each bind D-ribose 5-phosphate.

The protein belongs to the ribose-phosphate pyrophosphokinase family. Class I subfamily. As to quaternary structure, homohexamer. Requires Mg(2+) as cofactor.

The protein localises to the cytoplasm. It carries out the reaction D-ribose 5-phosphate + ATP = 5-phospho-alpha-D-ribose 1-diphosphate + AMP + H(+). It functions in the pathway metabolic intermediate biosynthesis; 5-phospho-alpha-D-ribose 1-diphosphate biosynthesis; 5-phospho-alpha-D-ribose 1-diphosphate from D-ribose 5-phosphate (route I): step 1/1. Functionally, involved in the biosynthesis of the central metabolite phospho-alpha-D-ribosyl-1-pyrophosphate (PRPP) via the transfer of pyrophosphoryl group from ATP to 1-hydroxyl of ribose-5-phosphate (Rib-5-P). This chain is Ribose-phosphate pyrophosphokinase, found in Haemophilus ducreyi (strain 35000HP / ATCC 700724).